Consider the following 410-residue polypeptide: Mating-type locus allele B1 protein (410 aa).

Positions 1–110 are variable domain between B alleles; the sequence is MSSDPNFSLI…FNVVSPDVGC (110 aa). The segment at residues 107 to 184 is a DNA-binding region (homeobox; TALE-type); it reads DVGCRNLSED…NARRRSGWSH (78 aa). Residues 111–410 form a highly conserved between B alleles region; the sequence is RNLSEDLPAY…PFLCLSVAFV (300 aa). Disordered regions lie at residues 202–239, 278–335, and 374–395; these read RAKL…PLTP, TPKP…TPEL, and ARGN…PDEV. Low complexity predominate over residues 205–233; it reads LSSSNQSTPPSSTSDSLSNNLDDVLSDNL. A Nuclear localization signal motif is present at residues 276-308; that stretch reads KKTPKPGMPRPVTTVAKRHPARKTKPAAKPKSR. Residues 291–307 are compositionally biased toward basic residues; it reads AKRHPARKTKPAAKPKS. Polar residues predominate over residues 312–335; sequence PRASTTPSIDSTLDSSKLESTPEL. The not essential for B1 function stretch occupies residues 333–410; sequence PELSMCSTAD…PFLCLSVAFV (78 aa). Positions 375 to 388 are enriched in basic residues; it reads RGNRKVKALPKRAG.

It belongs to the TALE/M-ATYP homeobox family.

The protein localises to the nucleus. In terms of biological role, the B locus has at least 25 alleles, and any combination of two different B alleles yields a multimeric regulatory protein, that activates genes responsible for the pathogenicity and for the sexual development of the fungus within the corn plant. The polypeptide is Mating-type locus allele B1 protein (Mycosarcoma maydis (Corn smut fungus)).